We begin with the raw amino-acid sequence, 263 residues long: Methylesterase 2 (263 aa).

The Acyl-ester intermediate role is filled by Ser-85. Residues Asp-213 and His-241 each act as charge relay system in the active site.

The protein belongs to the AB hydrolase superfamily. Methylesterase family.

It carries out the reaction methyl (indol-3-yl)acetate + H2O = (indol-3-yl)acetate + methanol + H(+). The enzyme catalyses methyl (-)-jasmonate + H2O = jasmonate + methanol + H(+). It catalyses the reaction methyl salicylate + H2O = salicylate + methanol + H(+). The protein operates within plant hormone biosynthesis. Its pathway is lipid metabolism; oxylipin biosynthesis. Esterase activity is down-regulated by salicylic acid (SA). Down-regulated by agrochemicals Paraoxon, 3,4-DCl and Profenofos. Methylesterase shown to have carboxylesterase activity, methyl indole-3-acetic acid (MeIAA) esterase activity, methyl salicylate (MeSA) esterase activity and methyl jasmonate (MeJA) esterase activity in vitro. This is Methylesterase 2 from Arabidopsis thaliana (Mouse-ear cress).